The chain runs to 148 residues: Large ribosomal subunit protein uL15 (148 aa).

Residues 1 to 30 are compositionally biased toward basic residues; that stretch reads MPSRLRKTRKLRGHVSHGHGRIGKHRKHPG. A disordered region spans residues 1–37; that stretch reads MPSRLRKTRKLRGHVSHGHGRIGKHRKHPGGRGNAGG. Residue H39 is modified to (3S)-3-hydroxyhistidine. N6-acetyllysine is present on residues K47 and K55. S68 is subject to Phosphoserine. K110 is subject to N6-acetyllysine.

It belongs to the universal ribosomal protein uL15 family. Component of the large ribosomal subunit. In terms of processing, hydroxylated on His-39 by MINA.

The protein localises to the cytoplasm. Component of the large ribosomal subunit. The ribosome is a large ribonucleoprotein complex responsible for the synthesis of proteins in the cell. This Bos taurus (Bovine) protein is Large ribosomal subunit protein uL15 (RPL27A).